Reading from the N-terminus, the 585-residue chain is Neopullulanase 2 (585 aa).

Asn143, Asp145, Asn148, Asp149, Gly169, and Asp171 together coordinate Ca(2+). Positions 244 and 323 each coordinate substrate. Residue Asp325 is the Nucleophile of the active site. Glu354 serves as the catalytic Proton donor. Substrate contacts are provided by residues 420-421 (HD), Asp465, and Arg469.

The protein belongs to the glycosyl hydrolase 13 family. As to quaternary structure, monomer. The cofactor is Ca(2+).

The enzyme catalyses Hydrolysis of pullulan to panose (6-alpha-D-glucosylmaltose).. In terms of biological role, hydrolyzes pullulan efficiently but only a small amount of starch. Endohydrolysis of 1,4-alpha-glucosidic linkages in pullulan to form panose. Also cleaves (1-6)-alpha-glucosidic linkages to form maltotriose. The polypeptide is Neopullulanase 2 (tvaII) (Thermoactinomyces vulgaris).